A 298-amino-acid chain; its full sequence is uncharacterized protein (298 aa).

Residue Asp119 is part of the active site.

The protein belongs to the pseudouridine synthase RluA family.

It carries out the reaction a uridine in RNA = a pseudouridine in RNA. This is an uncharacterized protein from Helicobacter pylori (strain ATCC 700392 / 26695) (Campylobacter pylori).